The following is a 323-amino-acid chain: Methionyl-tRNA formyltransferase (323 aa).

118–121 contributes to the (6S)-5,6,7,8-tetrahydrofolate binding site; sequence SLLP.

It belongs to the Fmt family.

The catalysed reaction is L-methionyl-tRNA(fMet) + (6R)-10-formyltetrahydrofolate = N-formyl-L-methionyl-tRNA(fMet) + (6S)-5,6,7,8-tetrahydrofolate + H(+). Attaches a formyl group to the free amino group of methionyl-tRNA(fMet). The formyl group appears to play a dual role in the initiator identity of N-formylmethionyl-tRNA by promoting its recognition by IF2 and preventing the misappropriation of this tRNA by the elongation apparatus. This Buchnera aphidicola subsp. Baizongia pistaciae (strain Bp) protein is Methionyl-tRNA formyltransferase.